A 310-amino-acid polypeptide reads, in one-letter code: Tyrosine recombinase XerC (310 aa).

A Core-binding (CB) domain is found at Asn11–Val97. The 181-residue stretch at Pro118–Asp298 folds into the Tyr recombinase domain. Active-site residues include Arg157, Lys181, His250, Arg253, and His276. The active-site O-(3'-phospho-DNA)-tyrosine intermediate is the Tyr285.

This sequence belongs to the 'phage' integrase family. XerC subfamily. Forms a cyclic heterotetrameric complex composed of two molecules of XerC and two molecules of XerD.

The protein resides in the cytoplasm. Site-specific tyrosine recombinase, which acts by catalyzing the cutting and rejoining of the recombining DNA molecules. The XerC-XerD complex is essential to convert dimers of the bacterial chromosome into monomers to permit their segregation at cell division. It also contributes to the segregational stability of plasmids. In Vibrio atlanticus (strain LGP32) (Vibrio splendidus (strain Mel32)), this protein is Tyrosine recombinase XerC.